The chain runs to 387 residues: Cysteine desulfurase IscS (387 aa).

Residues 73–74 (AT), asparagine 155, glutamine 183, and 203–205 (SAH) contribute to the pyridoxal 5'-phosphate site. Lysine 206 is subject to N6-(pyridoxal phosphate)lysine. Threonine 241 contributes to the pyridoxal 5'-phosphate binding site. The active-site Cysteine persulfide intermediate is cysteine 328. Cysteine 328 contributes to the [2Fe-2S] cluster binding site.

The protein belongs to the class-V pyridoxal-phosphate-dependent aminotransferase family. NifS/IscS subfamily. As to quaternary structure, homodimer. Forms a heterotetramer with IscU, interacts with other sulfur acceptors. Requires pyridoxal 5'-phosphate as cofactor.

The protein localises to the cytoplasm. The enzyme catalyses (sulfur carrier)-H + L-cysteine = (sulfur carrier)-SH + L-alanine. Its pathway is cofactor biosynthesis; iron-sulfur cluster biosynthesis. In terms of biological role, master enzyme that delivers sulfur to a number of partners involved in Fe-S cluster assembly, tRNA modification or cofactor biosynthesis. Catalyzes the removal of elemental sulfur atoms from cysteine to produce alanine. Functions as a sulfur delivery protein for Fe-S cluster synthesis onto IscU, an Fe-S scaffold assembly protein, as well as other S acceptor proteins. The sequence is that of Cysteine desulfurase IscS from Helicobacter pylori (strain P12).